The chain runs to 167 residues: Respiratory supercomplex factor 1-A, mitochondrial (167 aa).

An HIG1 domain is found at 1 to 86 (MCSDFEEETS…TERKQRREFE (86 aa)). Transmembrane regions (helical) follow at residues 21 to 38 (EPLI…LYRA) and 53 to 75 (MFRA…GMYY). A coiled-coil region spans residues 75-107 (YKTERKQRREFEKKVEERKAQEKRDAWLRELEA).

This sequence belongs to the RCF1 family. In terms of assembly, associates with the respiratory chain complex III/complex IV supercomplex.

It is found in the mitochondrion membrane. Cytochrome c oxidase subunit which plays a role in assembly of respiratory supercomplexes. In Talaromyces marneffei (strain ATCC 18224 / CBS 334.59 / QM 7333) (Penicillium marneffei), this protein is Respiratory supercomplex factor 1-A, mitochondrial (rcf1-A).